A 290-amino-acid chain; its full sequence is Pyridoxal kinase PdxY (290 aa).

Substrate-binding positions include Ser9 and 44-45 (TQ). 4 residues coordinate ATP: Asp112, Val144, Glu149, and Lys182. Asp221 is a substrate binding site.

The protein belongs to the pyridoxine kinase family. PdxY subfamily. In terms of assembly, homodimer. It depends on Mg(2+) as a cofactor.

It carries out the reaction pyridoxal + ATP = pyridoxal 5'-phosphate + ADP + H(+). The protein operates within cofactor metabolism; pyridoxal 5'-phosphate salvage; pyridoxal 5'-phosphate from pyridoxal: step 1/1. Pyridoxal kinase involved in the salvage pathway of pyridoxal 5'-phosphate (PLP). Catalyzes the phosphorylation of pyridoxal to PLP. The sequence is that of Pyridoxal kinase PdxY from Vibrio vulnificus (strain CMCP6).